Here is a 414-residue protein sequence, read N- to C-terminus: Enolase (414 aa).

Residue Q162 participates in (2R)-2-phosphoglycerate binding. The active-site Proton donor is E204. The Mg(2+) site is built by D239, E280, and D307. The (2R)-2-phosphoglycerate site is built by K332, R361, S362, and K383. The active-site Proton acceptor is the K332.

The protein belongs to the enolase family. The cofactor is Mg(2+).

The protein localises to the cytoplasm. Its subcellular location is the secreted. It is found in the cell surface. The catalysed reaction is (2R)-2-phosphoglycerate = phosphoenolpyruvate + H2O. The protein operates within carbohydrate degradation; glycolysis; pyruvate from D-glyceraldehyde 3-phosphate: step 4/5. Catalyzes the reversible conversion of 2-phosphoglycerate (2-PG) into phosphoenolpyruvate (PEP). It is essential for the degradation of carbohydrates via glycolysis. This chain is Enolase, found in Campylobacter jejuni subsp. doylei (strain ATCC BAA-1458 / RM4099 / 269.97).